The chain runs to 387 residues: Acetylajmalan esterase (387 aa).

The N-terminal stretch at 1–22 (MGFARLLHLVFSLLVFAGITNG) is a signal peptide. Catalysis depends on Ser36, which acts as the Nucleophile. Residues Asn98, Asn180, Asn199, Asn249, and Asn296 are each glycosylated (N-linked (GlcNAc...) asparagine). Catalysis depends on residues Asp337 and His340.

This sequence belongs to the 'GDSL' lipolytic enzyme family.

The catalysed reaction is 17-O-acetylajmaline + H2O = ajmaline + acetate + H(+). It carries out the reaction 17-O-acetylnorajmaline + H2O = norajmaline + acetate + H(+). It functions in the pathway alkaloid biosynthesis; ajmaline biosynthesis. Its function is as follows. Acetylesterase involved in the biosynthesis of ajmaline-type monoterpenoid indole alkaloids (MIAs) natural products, important plant-derived pharmaceuticals used in the therapy of heart disorders. Deacetylates 17-O-acetylajmaline and 17-O-acetylnorajmaline to produce ajmaline and norajmaline, but is inactive toward other acetylated alkaloids. In Rauvolfia serpentina (Serpentine wood), this protein is Acetylajmalan esterase.